The chain runs to 539 residues: MAAKDVKFGNDARVKMLRGVNVLADAVKVTLGPKGRNVVLDKSFGAPTITKDGVSVAREIELEDKFENMGAQMVKEVASKANDAAGDGTTTATVLAQAIITEGLKAVAAGMNPMDLKRGIDKAVASAVEELKALSVPCSDSKAIAQVGTISANSDETVGKLIAEAMDKVGKEGVITVEDGTGLEDELDVVEGMQFDRGYLSPYFINKPETGAVELESPFILLADKKISNIREMLPVLEAVAKAGKPLVIIAEDVEGEALATLVVNTMRGIVKVAAVKAPGFGDRRKAMLQDIATLTGGTVISEEIGMELEKATLEDLGQAKRVVINKDTTTIIDGVGEEAAIQGRVGQIRKQIEEATSDYDREKLQERVAKLAGGVAVIKVGAATEVEMKEKKARVDDALHATRAAVEEGVVAGGGVALVRVAAKLAGLTAQNEDQNVGIKVALRAMEAPLRQIVSNAGEEPSVVANNVKAGEGNYGYNAATEEYGNMIDFGILDPTKVTRSALQYAASVAGLMITTECMVTDMPKGDAPDLXAAGMGG.

Residues 30 to 33 (TLGP), lysine 51, 87 to 91 (DGTTT), glycine 415, 479 to 481 (NAA), and aspartate 495 each bind ATP.

It belongs to the chaperonin (HSP60) family. Forms a cylinder of 14 subunits composed of two heptameric rings stacked back-to-back. Interacts with the co-chaperonin GroES.

Its subcellular location is the cytoplasm. The enzyme catalyses ATP + H2O + a folded polypeptide = ADP + phosphate + an unfolded polypeptide.. In terms of biological role, together with its co-chaperonin GroES, plays an essential role in assisting protein folding. The GroEL-GroES system forms a nano-cage that allows encapsulation of the non-native substrate proteins and provides a physical environment optimized to promote and accelerate protein folding. This Enterobacter agglomerans (Erwinia herbicola) protein is Chaperonin GroEL.